We begin with the raw amino-acid sequence, 116 residues long: Large ribosomal subunit protein uL22 (116 aa).

This sequence belongs to the universal ribosomal protein uL22 family. In terms of assembly, part of the 50S ribosomal subunit.

In terms of biological role, this protein binds specifically to 23S rRNA; its binding is stimulated by other ribosomal proteins, e.g. L4, L17, and L20. It is important during the early stages of 50S assembly. It makes multiple contacts with different domains of the 23S rRNA in the assembled 50S subunit and ribosome. The globular domain of the protein is located near the polypeptide exit tunnel on the outside of the subunit, while an extended beta-hairpin is found that lines the wall of the exit tunnel in the center of the 70S ribosome. The sequence is that of Large ribosomal subunit protein uL22 from Gloeobacter violaceus (strain ATCC 29082 / PCC 7421).